The sequence spans 291 residues: ATP synthase gamma chain (291 aa).

It belongs to the ATPase gamma chain family. In terms of assembly, F-type ATPases have 2 components, CF(1) - the catalytic core - and CF(0) - the membrane proton channel. CF(1) has five subunits: alpha(3), beta(3), gamma(1), delta(1), epsilon(1). CF(0) has three main subunits: a, b and c.

The protein localises to the cell inner membrane. Functionally, produces ATP from ADP in the presence of a proton gradient across the membrane. The gamma chain is believed to be important in regulating ATPase activity and the flow of protons through the CF(0) complex. The sequence is that of ATP synthase gamma chain from Cupriavidus pinatubonensis (strain JMP 134 / LMG 1197) (Cupriavidus necator (strain JMP 134)).